We begin with the raw amino-acid sequence, 161 residues long: Protein-export protein SecB (161 aa).

Belongs to the SecB family. In terms of assembly, homotetramer, a dimer of dimers. One homotetramer interacts with 1 SecA dimer.

The protein localises to the cytoplasm. One of the proteins required for the normal export of preproteins out of the cell cytoplasm. It is a molecular chaperone that binds to a subset of precursor proteins, maintaining them in a translocation-competent state. It also specifically binds to its receptor SecA. The sequence is that of Protein-export protein SecB from Afipia carboxidovorans (strain ATCC 49405 / DSM 1227 / KCTC 32145 / OM5) (Oligotropha carboxidovorans).